The sequence spans 1463 residues: Chitin binding domain (ChtBD2) containing chtb-1 (1463 aa).

An N-terminal signal peptide occupies residues 1-17 (MLRNLILITLLVASGHG). The segment at 70–99 (SSVPSVPAENTQPQQHPKARKPASPNICEQ) is disordered. The Chitin-binding type-2 domain occupies 94–164 (PNICEQDNGA…IVPKRMSSLS (71 aa)). The cysteines at positions 141 and 154 are disulfide-linked. Disordered stretches follow at residues 720–773 (IDSD…DFPI) and 841–869 (KNPK…FPDS). Over residues 722-734 (SDTNSTTNPSQPE) the composition is skewed to polar residues. Composition is skewed to basic residues over residues 740–756 (NNTK…KPKK) and 843–853 (PKKRKTKRRKQ).

This Caenorhabditis elegans protein is Chitin binding domain (ChtBD2) containing chtb-1.